The sequence spans 407 residues: Elongation factor Tu, chloroplastic (407 aa).

The tr-type G domain maps to 10-212 (KPHVNIGTIG…SVDNYIPAPE (203 aa)). Positions 19–26 (GHVDHGKT) are G1. 19-26 (GHVDHGKT) contributes to the GTP binding site. Mg(2+) is bound at residue threonine 26. The tract at residues 59–63 (GITIN) is G2. Positions 80 to 83 (DCPG) are G3. GTP-binding positions include 80-84 (DCPGH) and 135-138 (NKAD). The tract at residues 135-138 (NKAD) is G4. A G5 region spans residues 173 to 175 (SAL).

Belongs to the TRAFAC class translation factor GTPase superfamily. Classic translation factor GTPase family. EF-Tu/EF-1A subfamily.

The protein resides in the plastid. The protein localises to the chloroplast. It catalyses the reaction GTP + H2O = GDP + phosphate + H(+). In terms of biological role, GTP hydrolase that promotes the GTP-dependent binding of aminoacyl-tRNA to the A-site of ribosomes during protein biosynthesis. The protein is Elongation factor Tu, chloroplastic (tufA) of Emiliania huxleyi (Coccolithophore).